We begin with the raw amino-acid sequence, 351 residues long: MSITIKLGQLAEFLGATLRGDKDKDITGLAALQEAGPGQISFLAKSQYRKFLVDAQAAAVLLKPADADSYTGDALLVPDPYLAYARISHFFDPKPKGVAGVHPTAVIADDAQVDPAASIGAFVVIESGARIAAGVTIGAHSFIGARCEIGEGGWLAPRVTLYHDVRIGKHVVIQSGAVLGGEGFGFANEKGVWQKIAQIGGVTLGDDVEVGVNTAIDRGALADTRIGNGVKLDNQIQIAHNVQVGDHTAMAACVGISGSTKIGKHCMLAGGVGLVGHIDICDGVYITGMTMVTHSITEPGSYSSGTAMQPAAEWRKSAARLRKIDDMARRLQKLEKAVETVTCADNRSSDG.

Histidine 240 acts as the Proton acceptor in catalysis.

Belongs to the transferase hexapeptide repeat family. LpxD subfamily. As to quaternary structure, homotrimer.

It carries out the reaction a UDP-3-O-[(3R)-3-hydroxyacyl]-alpha-D-glucosamine + a (3R)-hydroxyacyl-[ACP] = a UDP-2-N,3-O-bis[(3R)-3-hydroxyacyl]-alpha-D-glucosamine + holo-[ACP] + H(+). The protein operates within bacterial outer membrane biogenesis; LPS lipid A biosynthesis. Catalyzes the N-acylation of UDP-3-O-acylglucosamine using 3-hydroxyacyl-ACP as the acyl donor. Is involved in the biosynthesis of lipid A, a phosphorylated glycolipid that anchors the lipopolysaccharide to the outer membrane of the cell. This Pseudomonas savastanoi pv. phaseolicola (strain 1448A / Race 6) (Pseudomonas syringae pv. phaseolicola (strain 1448A / Race 6)) protein is UDP-3-O-acylglucosamine N-acyltransferase.